The following is a 240-amino-acid chain: tRNA pseudouridine synthase B (240 aa).

Residue Asp48 is the Nucleophile of the active site.

It belongs to the pseudouridine synthase TruB family. Type 1 subfamily.

The enzyme catalyses uridine(55) in tRNA = pseudouridine(55) in tRNA. Responsible for synthesis of pseudouridine from uracil-55 in the psi GC loop of transfer RNAs. In Bacteroides thetaiotaomicron (strain ATCC 29148 / DSM 2079 / JCM 5827 / CCUG 10774 / NCTC 10582 / VPI-5482 / E50), this protein is tRNA pseudouridine synthase B.